Consider the following 325-residue polypeptide: Plasminogen (325 aa).

2 consecutive Kringle domains span residues 80 to 146 and 159 to 217; these read ACVK…VPSC and LTPA…VLSV. 4 cysteine pairs are disulfide-bonded: Cys-81–Cys-146, Cys-102–Cys-135, Cys-124–Cys-141, and Cys-188–Cys-212.

It belongs to the peptidase S1 family. Plasminogen subfamily.

Its subcellular location is the secreted. The enzyme catalyses Preferential cleavage: Lys-|-Xaa &gt; Arg-|-Xaa, higher selectivity than trypsin. Converts fibrin into soluble products.. Plasmin dissolves the fibrin of blood clots and acts as a proteolytic factor in a variety of other processes including embryonic development, tissue remodeling, tumor invasion, and inflammation. The protein is Plasminogen of Petromyzon marinus (Sea lamprey).